The sequence spans 208 residues: MSLLIGYFLGSIPSAYLVTRRLTGRDIRQMGGGNMGGLNTFREVGVGAGAAVVLMDLAKGALAVSVAYYLLIQNAQWVILTGFAAVIGHNWPIWLDFKGGKGLGPAFGAMLFLLPVYGLPQHLLILALLVFIPLAITRNIALATGIALFSLPFLVWYGSHSEFATLISVLLFLMIGIKFVLDNRKNLRDPANRRNLIVDHWKRPDKNS.

The next 5 helical transmembrane spans lie at 52–72 (VVLM…YLLI), 77–97 (WVIL…WLDF), 112–132 (FLLP…LVFI), 140–160 (IALA…YGSH), and 161–181 (SEFA…KFVL).

This sequence belongs to the PlsY family. In terms of assembly, probably interacts with PlsX.

The protein resides in the cell membrane. The enzyme catalyses an acyl phosphate + sn-glycerol 3-phosphate = a 1-acyl-sn-glycero-3-phosphate + phosphate. It functions in the pathway lipid metabolism; phospholipid metabolism. In terms of biological role, catalyzes the transfer of an acyl group from acyl-phosphate (acyl-PO(4)) to glycerol-3-phosphate (G3P) to form lysophosphatidic acid (LPA). This enzyme utilizes acyl-phosphate as fatty acyl donor, but not acyl-CoA or acyl-ACP. This Dehalococcoides mccartyi (strain ATCC BAA-2266 / KCTC 15142 / 195) (Dehalococcoides ethenogenes (strain 195)) protein is Glycerol-3-phosphate acyltransferase 1.